Reading from the N-terminus, the 352-residue chain is NADP-dependent oxidoreductase RED1 (352 aa).

Residues 166–169 (GAVG), K192, Y208, N231, and 285–287 (FIV) contribute to the NADP(+) site.

This sequence belongs to the NADP-dependent oxidoreductase L4BD family.

It participates in mycotoxin biosynthesis. Its function is as follows. NADP-dependent oxidoreductase; part of the Tox1B locus, one of the 2 loci that mediate the biosynthesis of T-toxin, a family of linear polyketides 37 to 45 carbons in length, of which the major component is 41 carbons, and which leads to high virulence to maize. One of the PKSs (PKS1 or PKS2) could synthesize a precursor, used subsequently by the other PKS as starter unit, to add additional carbons. Variability in the length of the final carbon backbone C35-47 could be achieved by varying the number of condensation cycles, or use of different starter or extender units or might be due to decarboxylation of the penultimate product, catalyzed by DEC1. Additional proteins are required for the biosynthesis of T-toxin, including oxidoreductases RED1, RED2, RED3, LAM1 and OXI1, as well as esterase TOX9. This Cochliobolus heterostrophus (strain C4 / ATCC 48331 / race T) (Southern corn leaf blight fungus) protein is NADP-dependent oxidoreductase RED1.